The chain runs to 75 residues: Dermaseptin-related peptide (75 aa).

The signal sequence occupies residues 1–22 (MAFLNKSLLLVLFLGLVSLSIC). Positions 23-43 (EEERRENEDEEEQEDDEQSEM) are excised as a propeptide. The interval 24–44 (EERRENEDEEEQEDDEQSEMR) is disordered. Acidic residues predominate over residues 30–40 (EDEEEQEDDEQ). A Glutamine amide modification is found at Q72. A propeptide spanning residues 74–75 (EQ) is cleaved from the precursor.

As to expression, expressed by the skin glands.

The protein localises to the secreted. Has antibacterial activity against Gram-positive bacterium M.luteus NCT C2665 but not against Gram-negative bacterium E.coli K12D31. In Agalychnis callidryas (Red-eyed tree frog), this protein is Dermaseptin-related peptide.